The following is a 617-amino-acid chain: Electron transfer flavoprotein-ubiquinone oxidoreductase, mitochondrial (617 aa).

The transit peptide at 1–33 (MLVPLAKLSCPAYQCFHALKIKKNYLPLCATRW) directs the protein to the mitochondrion. 71–85 (VVIVGAGPAGLSAAV) is a binding site for FAD. Residue lysine 96 is modified to N6-acetyllysine. The stretch at 109-130 (IGAHTLSGACLDPGAFKELFPD) is an intramembrane region. 2 positions are modified to N6-acetyllysine: lysine 132 and lysine 223. Glycine 305 and glycine 306 together coordinate a ubiquinone. Lysine 357 is subject to N6-acetyllysine. The stretch at 428 to 447 (MGLHVTEYEDNLKNSWVWKE) is an intramembrane region. The residue at position 551 (serine 551) is a Phosphoserine. Cysteine 561, cysteine 586, cysteine 589, and cysteine 592 together coordinate [4Fe-4S] cluster. The region spanning 577–606 (FRLQINAQNCVHCKTCDIKDPSQNINWVVP) is the 4Fe-4S ferredoxin-type domain.

The protein belongs to the ETF-QO/FixC family. Monomer. [4Fe-4S] cluster serves as cofactor. The cofactor is FAD.

It is found in the mitochondrion inner membrane. It carries out the reaction a ubiquinone + reduced [electron-transfer flavoprotein] = a ubiquinol + oxidized [electron-transfer flavoprotein] + H(+). Its function is as follows. Accepts electrons from ETF and reduces ubiquinone. This Pongo abelii (Sumatran orangutan) protein is Electron transfer flavoprotein-ubiquinone oxidoreductase, mitochondrial (ETFDH).